Here is a 167-residue protein sequence, read N- to C-terminus: NADH-quinone oxidoreductase subunit E (167 aa).

[2Fe-2S] cluster contacts are provided by cysteine 91, cysteine 96, cysteine 132, and cysteine 136.

It belongs to the complex I 24 kDa subunit family. It depends on [2Fe-2S] cluster as a cofactor.

The enzyme catalyses a quinone + NADH + 5 H(+)(in) = a quinol + NAD(+) + 4 H(+)(out). Functionally, NDH-1 shuttles electrons from NADH, via FMN and iron-sulfur (Fe-S) centers, to quinones in the respiratory chain. Couples the redox reaction to proton translocation (for every two electrons transferred, four hydrogen ions are translocated across the cytoplasmic membrane), and thus conserves the redox energy in a proton gradient. This is NADH-quinone oxidoreductase subunit E (nuoE) from Rickettsia bellii (strain RML369-C).